The sequence spans 210 residues: Small ribosomal subunit protein uS3 (210 aa).

The KH type-2 domain maps to 17 to 86; the sequence is IDEFLEKELR…NPQIEVEEIK (70 aa).

This sequence belongs to the universal ribosomal protein uS3 family. As to quaternary structure, part of the 30S ribosomal subunit.

Functionally, binds the lower part of the 30S subunit head. This chain is Small ribosomal subunit protein uS3, found in Pyrococcus furiosus (strain ATCC 43587 / DSM 3638 / JCM 8422 / Vc1).